A 188-amino-acid chain; its full sequence is Probable DNA-directed RNA polymerase subunit delta (188 aa).

The HTH HARE-type domain occupies 14–81; it reads LSMIEVAHAL…GNNVWALRSW (68 aa). The interval 96–188 is disordered; the sequence is EIEDEEEEEK…EDDSDDTDED (93 aa). Composition is skewed to acidic residues over residues 118–150 and 158–188; these read IEDEIDPEDEEGTKETTEEDMSYDTQAEDEDKD and ELAEVELDNVDEEVDIEVEDDEDDSDDTDED.

This sequence belongs to the RpoE family. RNAP is composed of a core of 2 alpha, a beta and a beta' subunits. The core is associated with a delta subunit and one of several sigma factors.

Participates in both the initiation and recycling phases of transcription. In the presence of the delta subunit, RNAP displays an increased specificity of transcription, a decreased affinity for nucleic acids, and an increased efficiency of RNA synthesis because of enhanced recycling. This is Probable DNA-directed RNA polymerase subunit delta from Lactococcus lactis subsp. cremoris (strain MG1363).